The sequence spans 95 residues: MLYTVGRSPYQCDFNVISKLLARGDDILFIQDGVLAGIEGNCYLSALISCGAALYALKEDIEARGLDDQVSDKVQVIDYTDFVNLTVKHHQQFAW.

This sequence belongs to the DsrH/TusB family. As to quaternary structure, heterohexamer, formed by a dimer of trimers. The hexameric TusBCD complex contains 2 copies each of TusB, TusC and TusD. The TusBCD complex interacts with TusE.

The protein localises to the cytoplasm. In terms of biological role, part of a sulfur-relay system required for 2-thiolation of 5-methylaminomethyl-2-thiouridine (mnm(5)s(2)U) at tRNA wobble positions. In Photorhabdus laumondii subsp. laumondii (strain DSM 15139 / CIP 105565 / TT01) (Photorhabdus luminescens subsp. laumondii), this protein is Protein TusB.